The chain runs to 338 residues: NADPH dehydrogenase (338 aa).

FMN is bound at residue 23 to 26 (SPMC). Residue tyrosine 28 participates in substrate binding. Residues alanine 60 and glutamine 102 each coordinate FMN. 164–167 (HAAH) lines the substrate pocket. Residues arginine 215 and 307 to 308 (GR) contribute to the FMN site.

It belongs to the NADH:flavin oxidoreductase/NADH oxidase family. NamA subfamily. As to quaternary structure, homotetramer. Composed of a dimer of active dimers. FMN serves as cofactor.

It catalyses the reaction A + NADPH + H(+) = AH2 + NADP(+). Its activity is regulated as follows. Inhibited by p-hydroxybenzaldehyde (pHBA) and p-nitrophenol (pNP). In terms of biological role, catalyzes the reduction of the double bond of an array of alpha,beta-unsaturated aldehydes and ketones. It also reduces the nitro group of nitroester and nitroaromatic compounds. It could have a role in detoxification processes. The protein is NADPH dehydrogenase (namA) of Bacillus subtilis (strain 168).